A 316-amino-acid polypeptide reads, in one-letter code: Ribosomal RNA small subunit methyltransferase H (316 aa).

S-adenosyl-L-methionine-binding positions include 35 to 37 (AGH), Asp-55, Phe-84, Asp-105, and Gln-112.

Belongs to the methyltransferase superfamily. RsmH family.

It is found in the cytoplasm. It catalyses the reaction cytidine(1402) in 16S rRNA + S-adenosyl-L-methionine = N(4)-methylcytidine(1402) in 16S rRNA + S-adenosyl-L-homocysteine + H(+). Functionally, specifically methylates the N4 position of cytidine in position 1402 (C1402) of 16S rRNA. This chain is Ribosomal RNA small subunit methyltransferase H, found in Streptococcus gordonii (strain Challis / ATCC 35105 / BCRC 15272 / CH1 / DL1 / V288).